Here is a 174-residue protein sequence, read N- to C-terminus: Protein SHI RELATED SEQUENCE 3 (174 aa).

Residues cysteine 9, cysteine 12, cysteine 20, cysteine 25, cysteine 29, and cysteine 36 each contribute to the Zn(2+) site. The zn(2)-C6 fungal-type; degenerate DNA-binding region spans 9-36 (CEDCGNQAKKDCVYMRCRTCCKSKAFHC). The Required for homo- and heterodimerization motif lies at 110 to 113 (IGGH).

Belongs to the SHI protein family.

Its subcellular location is the nucleus. Transcription activator that binds DNA on 5'-ACTCTAC-3' and promotes auxin homeostasis-regulating gene expression (e.g. YUC genes), as well as genes affecting stamen development, cell expansion and timing of flowering. Synergistically with other SHI-related proteins, regulates gynoecium, stamen and leaf development in a dose-dependent manner, controlling apical-basal patterning. Promotes style and stigma formation, and influences vascular development during gynoecium development. May also have a role in the formation and/or maintenance of the shoot apical meristem (SAM). The sequence is that of Protein SHI RELATED SEQUENCE 3 (SRS3) from Arabidopsis thaliana (Mouse-ear cress).